The primary structure comprises 184 residues: Small ribosomal subunit protein bS16 (184 aa).

Positions 150–160 (KKAAEAAEKAA) are enriched in basic and acidic residues. The tract at residues 150-184 (KKAAEAAEKAAAEAPAEEATEAPAEEAAATEAAAE) is disordered. Acidic residues predominate over residues 164–173 (PAEEATEAPA). A compositionally biased stretch (low complexity) spans 174-184 (EEAAATEAAAE).

The protein belongs to the bacterial ribosomal protein bS16 family.

This is Small ribosomal subunit protein bS16 from Bacteroides thetaiotaomicron (strain ATCC 29148 / DSM 2079 / JCM 5827 / CCUG 10774 / NCTC 10582 / VPI-5482 / E50).